The primary structure comprises 142 residues: Transcriptional regulator MraZ (142 aa).

SpoVT-AbrB domains are found at residues 5-47 and 76-119; these read THSP…SERE and ASDE…DAQA.

It belongs to the MraZ family. In terms of assembly, forms oligomers.

The protein resides in the cytoplasm. It localises to the nucleoid. This is Transcriptional regulator MraZ from Arthrobacter sp. (strain FB24).